Consider the following 828-residue polypeptide: Hapless 2 (828 aa).

The N-terminal stretch at 1 to 32 (MKNKLINLRSKHIYKLIIIIFFCIILKYYKWC) is a signal peptide. Topologically, residues 33-680 (DFKNKVFFIQ…INTVKTLIGK (648 aa)) are extracellular. Cysteines 53 and 62 form a disulfide. N-linked (GlcNAc...) asparagine glycosylation occurs at Asn-74. Cystine bridges form between Cys-142–Cys-209, Cys-170–Cys-381, Cys-172–Cys-191, and Cys-363–Cys-388. Positions 174-191 (TYNYFKDDEFIKRAKLKC) are cd loop; involved in gamete fusion. Residues Asn-233, Asn-250, Asn-264, Asn-293, and Asn-333 are each glycosylated (N-linked (GlcNAc...) asparagine). Residues Asn-479, Asn-516, Asn-531, and Asn-539 are each glycosylated (N-linked (GlcNAc...) asparagine). An intrachain disulfide couples Cys-546 to Cys-592. A helical membrane pass occupies residues 681-701 (FAIIAILIILAPALIPLLPFF). Topologically, residues 702-828 (LNFFFLFIST…SGKSKIPPLR (127 aa)) are cytoplasmic. Positions 773–828 (RKNKKKFNKNNISSNIKHKKGGKKVKQKEPNRNSNHTSHEYADTSPSGKSKIPPLR) are disordered. The span at 788–798 (IKHKKGGKKVK) shows a compositional bias: basic residues. Residues 799 to 814 (QKEPNRNSNHTSHEYA) show a composition bias toward basic and acidic residues.

Belongs to the HAP2/GCS1 family.

The protein localises to the cell membrane. Functionally, during fertilization, required on male gametes for their fusion with female gametes, and for subsequent ookinete formation in the host. Thereby, required for mosquito-mediated transmission to other animals. Probably initiates the fusion of gamete cell membranes by inserting part of its extracellular domain into the cell membrane of a female gamete. In Plasmodium berghei (strain Anka), this protein is Hapless 2.